Reading from the N-terminus, the 67-residue chain is Small ribosomal subunit protein eS17 (67 aa).

Belongs to the eukaryotic ribosomal protein eS17 family.

The chain is Small ribosomal subunit protein eS17 from Haloquadratum walsbyi (strain DSM 16790 / HBSQ001).